We begin with the raw amino-acid sequence, 988 residues long: Kinesin-like protein CIN8 (988 aa).

A Kinesin motor domain is found at 33–470 (NILVAVRCRG…LEYASKAKNI (438 aa)). 125–132 (GMTSTGKT) contributes to the ATP binding site. Residues 206-301 (FDSNVNGTSA…NSNNTNQQQS (96 aa)) form a disordered region. The segment covering 208–237 (SNVNGTSASGSSSRSSSRNNSPRSAPDNSR) has biased composition (low complexity). Polar residues predominate over residues 248-280 (HNTTGNSKISNNNHNKFSRFKQTSQESTRAHAS). Low complexity predominate over residues 281–301 (NNHQNVHIPNNNSNNTNQQQS). 2 coiled-coil regions span residues 514-619 (EHYK…ELQQ) and 707-769 (KLAE…MQNF). Basic and acidic residues predominate over residues 965 to 974 (ALQEKRKPED). Residues 965-988 (ALQEKRKPEDEVLLQAKLQRRNPD) are disordered.

Belongs to the TRAFAC class myosin-kinesin ATPase superfamily. Kinesin family. BimC subfamily.

The protein resides in the cytoplasm. It is found in the cytoskeleton. It localises to the spindle. Functionally, elongates the mitotic spindle by interacting with spindle microtubules to generate an outward force pushing spindle poles apart. Following spindle assembly, CIN8 and KIP1 apparently act to oppose a force, possibly generated by KAR3, that draws separated poles back together. The sequence is that of Kinesin-like protein CIN8 (CIN8) from Candida glabrata (strain ATCC 2001 / BCRC 20586 / JCM 3761 / NBRC 0622 / NRRL Y-65 / CBS 138) (Yeast).